The following is a 407-amino-acid chain: Multifunctional CCA protein (407 aa).

2 residues coordinate ATP: G8 and R11. The CTP site is built by G8 and R11. Mg(2+)-binding residues include D21 and D23. ATP contacts are provided by R91, R137, and R140. R91, R137, and R140 together coordinate CTP. The HD domain occupies 226 to 327; the sequence is TGIHVMAVVD…VKLLERTDAL (102 aa).

Belongs to the tRNA nucleotidyltransferase/poly(A) polymerase family. Bacterial CCA-adding enzyme type 1 subfamily. Monomer. Can also form homodimers and oligomers. Mg(2+) serves as cofactor. Requires Ni(2+) as cofactor.

The catalysed reaction is a tRNA precursor + 2 CTP + ATP = a tRNA with a 3' CCA end + 3 diphosphate. It catalyses the reaction a tRNA with a 3' CCA end + 2 CTP + ATP = a tRNA with a 3' CCACCA end + 3 diphosphate. Catalyzes the addition and repair of the essential 3'-terminal CCA sequence in tRNAs without using a nucleic acid template. Adds these three nucleotides in the order of C, C, and A to the tRNA nucleotide-73, using CTP and ATP as substrates and producing inorganic pyrophosphate. tRNA 3'-terminal CCA addition is required both for tRNA processing and repair. Also involved in tRNA surveillance by mediating tandem CCA addition to generate a CCACCA at the 3' terminus of unstable tRNAs. While stable tRNAs receive only 3'-terminal CCA, unstable tRNAs are marked with CCACCA and rapidly degraded. This chain is Multifunctional CCA protein, found in Aromatoleum aromaticum (strain DSM 19018 / LMG 30748 / EbN1) (Azoarcus sp. (strain EbN1)).